We begin with the raw amino-acid sequence, 665 residues long: MRGCLQLARWLSAAPTRPAASHWPGLCAAPRFFSHSAILRASARTARAAASKPPSDLESRIAAIPIERYRNFCIVAHVDHGKSTLSDRLLELTGTIEPGTNKQVLDKLDVERERGITVKAQTCTMIYNHNGEDYLLHLVDTPGHVDFRAEVSRSYASCGGALLLVDASQGVQAQTVANFYLAFAQGLELIPVINKVDLPSAEPERALEQMKQSFELDTENAVMVSAKSGLNVEKLLPTVVDKIPAPIGDCKKPLRMLLVDSWYDSYKGVICLVRVFDGEIRAGDQLVSFATGIKYYVGEVGIMYPNETPQTVIRAGQVGYIFFNPGMKRSKEAKIGDTYTKVGSEKAVEPLPGFEEPKAMVFVAAYPVDADHFEHLEDSINQLMLNDRSITVQKESSEALGAGFRLGFLGTLHCSVFEDRLRQEHGASIIITPPSVPVKVLWKDGREEIVTSPAKFPDEDELRSKVAEIKEPYVLATLTFPDEYLGKVIELCESNRGVQQSLEYFTSTQVILKYELPMAQLVDDFFGKLKGSTKGYASLDYEESAWQTSNIVKLQLLVNKAPVDAVARIVHYSQIERLGRKWVTKFKEHVDRQLFEVVIQAAVGRKVIARETVKPYRKDVLAKLHASDVSRRRKLLEKQKEGRKRLRAVGNVVIEHKAFQAFLSK.

A mitochondrion-targeting transit peptide spans 1–40 (MRGCLQLARWLSAAPTRPAASHWPGLCAAPRFFSHSAILR). Residues 67 to 247 (ERYRNFCIVA…TVVDKIPAPI (181 aa)) enclose the tr-type G domain. GTP contacts are provided by residues 76–83 (AHVDHGKS), 140–144 (DTPGH), and 194–197 (NKVD).

It belongs to the TRAFAC class translation factor GTPase superfamily. Classic translation factor GTPase family. LepA subfamily.

Its subcellular location is the mitochondrion inner membrane. The enzyme catalyses GTP + H2O = GDP + phosphate + H(+). Its function is as follows. Promotes mitochondrial protein synthesis. May act as a fidelity factor of the translation reaction, by catalyzing a one-codon backward translocation of tRNAs on improperly translocated ribosomes. Binds to mitochondrial ribosomes in a GTP-dependent manner. The protein is Translation factor guf1, mitochondrial (guf1) of Aspergillus terreus (strain NIH 2624 / FGSC A1156).